Reading from the N-terminus, the 251-residue chain is Fibroblast growth factor 23 (251 aa).

A signal peptide spans M1–A24. The cysteines at positions 95 and 113 are disulfide-linked. O-linked (GalNAc) threonine glycans are attached at residues T171 and T178. Positions R175–V251 are disordered. Basic and acidic residues predominate over residues R179–P189. S180 bears the Phosphoserine; by FAM20C mark.

Belongs to the heparin-binding growth factors family. As to quaternary structure, interacts with FGFR1, FGFR2, FGFR3 and FGFR4. Affinity between fibroblast growth factors (FGFs) and their receptors is increased by KL and heparan sulfate glycosaminoglycans that function as coreceptors. Following secretion this protein is inactivated by cleavage into a N-terminal fragment and a C-terminal fragment. The processing is effected by proprotein convertases. In terms of processing, O-glycosylated at Thr-171 and Thr-178 by GALNT3 and glycosylation of Thr-178 requires previous glycosylation at Thr171. Glycosylation is necessary for secretion; it blocks processing by proprotein convertases when the O-glycan is alpha 2,6-sialylated. Competition between proprotein convertase cleavage and block of cleavage by O-glycosylation determines the level of secreted active FGF23. Post-translationally, phosphorylation at Ser-180 mediated by FAM20C slows down glycosylation at Thr-178 notably. As to expression, expressed in the parathyroid.

It is found in the secreted. Its function is as follows. Regulator of phosphate homeostasis. Inhibits renal tubular phosphate transport by reducing SLC34A1 levels. Regulator of vitamin-D metabolism. Negatively regulates osteoblasts differentiation and matrix mineralization. Acts directly on the parathyroid to decrease PTH secretion. Up-regulates EGR1 expression in the presence of KL. The sequence is that of Fibroblast growth factor 23 (Fgf23) from Rattus norvegicus (Rat).